Consider the following 124-residue polypeptide: Ribonuclease pancreatic (124 aa).

The segment covering 1–15 (KESPAKKFQRQHMDP) has biased composition (basic and acidic residues). A disordered region spans residues 1 to 24 (KESPAKKFQRQHMDPDSSSSNSSN). Substrate-binding residues include lysine 7 and arginine 10. Histidine 12 serves as the catalytic Proton acceptor. N-linked (GlcNAc...) asparagine glycosylation is found at asparagine 21 and asparagine 34. 4 cysteine pairs are disulfide-bonded: cysteine 26/cysteine 84, cysteine 40/cysteine 95, cysteine 58/cysteine 110, and cysteine 65/cysteine 72. Substrate contacts are provided by residues 41–45 (KPVNT) and lysine 66. Residue asparagine 76 is glycosylated (N-linked (GlcNAc...) asparagine). Arginine 85 lines the substrate pocket. The Proton donor role is filled by histidine 119.

The protein belongs to the pancreatic ribonuclease family. Monomer. Interacts with and forms tight 1:1 complexes with RNH1. Dimerization of two such complexes may occur. Interaction with RNH1 inhibits this protein. Pancreas.

The protein localises to the secreted. The enzyme catalyses an [RNA] containing cytidine + H2O = an [RNA]-3'-cytidine-3'-phosphate + a 5'-hydroxy-ribonucleotide-3'-[RNA].. It carries out the reaction an [RNA] containing uridine + H2O = an [RNA]-3'-uridine-3'-phosphate + a 5'-hydroxy-ribonucleotide-3'-[RNA].. Its function is as follows. Endonuclease that catalyzes the cleavage of RNA on the 3' side of pyrimidine nucleotides. Acts on single-stranded and double-stranded RNA. This is Ribonuclease pancreatic (RNASE1) from Sus scrofa (Pig).